Here is a 236-residue protein sequence, read N- to C-terminus: Transcription repressor MYB6 (236 aa).

2 HTH myb-type domains span residues 9-61 (KAHT…INYL) and 62-116 (RPDL…KRKL). 2 DNA-binding regions (H-T-H motif) span residues 37-61 (WRSL…INYL) and 89-112 (WSLI…NTHI). Positions 159–181 (PKTENSSDNGASTSGTTTDEDLR) are disordered. Polar residues predominate over residues 162-175 (ENSSDNGASTSGTT).

Interacts with BHLH012/MYC1 and BHLH042/TT8. In terms of tissue distribution, expressed in roots, stems, flower buds, and siliques.

It localises to the nucleus. The protein is Transcription repressor MYB6 (MYB6) of Arabidopsis thaliana (Mouse-ear cress).